We begin with the raw amino-acid sequence, 478 residues long: MDTSDLFASCRKGDVGRVRYLLEQRDVEVNVRDKWDSTPLYYACLCGHEELVLYLLANGARCEANTFDGERCLYGALSDPIRRALRDYKQVTASCRRRDYYDDFLQRLLEQGIHSDVVFVVHGKPFRVHRCVLGARSAYFANMLDTKWKGKSVVVLRHPLINPVAFGALLQYLYTGRLDIGVEHVSDCERLAKQCQLWDLLSDLEAKCEKVSEFVASKPGTCVKVLTIEPPPADPRLREDMALLADCALPPELRGDLWELPFPCPDGFNSCPDICFRVAGCSFLCHKAFFCGRSDYFRALLDDHFRESEEPATSGGPPAVTLHGISPDVFTHVLYYMYSDHTELSPEAAYDVLSVADMYLLPGLKRLCGRSLAQMLDEDTVVGVWRVAKLFRLARLEDQCTEYMAKVIEKLVEREDFVEAVKEEAAAVAARQETDSIPLVDDIRFHVASTVQTYSAIEEAQQRLRALEDLLVSIGLDC.

ANK repeat units follow at residues 1–31 (MDTS…EVNV) and 35–64 (WDST…RCEA). BTB domains are found at residues 115–182 (SDVV…DIGV) and 272–346 (PDIC…ELSP). Residues 451-477 (VQTYSAIEEAQQRLRALEDLLVSIGLD) adopt a coiled-coil conformation.

Ubiquitously expressed in all fetal tissues examined including heart, brain, liver, and kidney. Also expressed at lower levels in both adult heart and hypertrophic heart.

The protein localises to the cytoplasm. Its function is as follows. May act as a mediator of the PTEN growth-suppressive signaling pathway. May play a role in developmental processes. The sequence is that of Ankyrin repeat and BTB/POZ domain-containing protein 1 from Homo sapiens (Human).